The primary structure comprises 906 residues: DNA mismatch repair protein MutS (906 aa).

656-663 lines the ATP pocket; it reads GPNMAGKS.

It belongs to the DNA mismatch repair MutS family.

Its function is as follows. This protein is involved in the repair of mismatches in DNA. It is possible that it carries out the mismatch recognition step. This protein has a weak ATPase activity. The polypeptide is DNA mismatch repair protein MutS (Rhodopseudomonas palustris (strain BisA53)).